The following is a 66-amino-acid chain: Alpha-conotoxin-like Tx2 (66 aa).

Positions 1–21 (MGMRMMFTVFLLVVLATTVVS) are cleaved as a signal peptide. Residues 22-49 (FTSGRRTFHGRNAAAKASGLVSLTDRRP) constitute a propeptide that is removed on maturation. 2 cysteine pairs are disulfide-bonded: Cys51-Cys57 and Cys52-Cys65. Positions 53–55 (SHP) are ser-Xaa-Pro motif, crucial for potent interaction with nAChR.

It belongs to the conotoxin A superfamily. In terms of tissue distribution, expressed by the venom duct.

It is found in the secreted. Its function is as follows. Alpha-conotoxins act on postsynaptic membranes, they bind to the nicotinic acetylcholine receptors (nAChR) and thus inhibit them. The protein is Alpha-conotoxin-like Tx2 of Conus textile (Cloth-of-gold cone).